We begin with the raw amino-acid sequence, 232 residues long: 7-cyano-7-deazaguanine synthase (232 aa).

Residue 7-17 (CSGGLDSVSLA) coordinates ATP. The Zn(2+) site is built by Cys-185, Cys-193, Cys-196, and Cys-199.

It belongs to the QueC family. It depends on Zn(2+) as a cofactor.

The catalysed reaction is 7-carboxy-7-deazaguanine + NH4(+) + ATP = 7-cyano-7-deazaguanine + ADP + phosphate + H2O + H(+). The protein operates within purine metabolism; 7-cyano-7-deazaguanine biosynthesis. In terms of biological role, catalyzes the ATP-dependent conversion of 7-carboxy-7-deazaguanine (CDG) to 7-cyano-7-deazaguanine (preQ(0)). This Brucella abortus (strain S19) protein is 7-cyano-7-deazaguanine synthase.